Here is a 96-residue protein sequence, read N- to C-terminus: CLAVATA3/ESR (CLE)-related protein 43 (96 aa).

Residues 1–28 (MGCRDILLTFSVALLLISLFQIWLFREG) form the signal peptide. The segment at 71-96 (FGLNNTNSRFEDSNRRIPSSPDRLHN) is disordered. N-linked (GlcNAc...) asparagine glycosylation is present at N74. A hydroxyproline mark is found at P88 and P91. P91 is a glycosylation site (O-linked (Ara...) hydroxyproline).

It belongs to the CLV3/ESR signal peptide family. The O-glycosylation (arabinosylation) of the hydroxyproline Pro-91 enhances binding affinity of the CLE43p peptide for its receptor. As to expression, expressed at low levels in seedlings.

It is found in the secreted. The protein resides in the extracellular space. In terms of biological role, extracellular signal peptide that regulates cell fate. Promotes pollen tube growth prolongation in a SKM1 and SKM2-dependent manner, especially under relatively high temperature (at 30 degrees Celsius), thus conferring tolerance against high temperature probably through the maintenance of mitochondrial activity. This is CLAVATA3/ESR (CLE)-related protein 43 from Arabidopsis thaliana (Mouse-ear cress).